Reading from the N-terminus, the 61-residue chain is Small ribosomal subunit protein uS14 (61 aa).

Zn(2+) contacts are provided by Cys-24, Cys-27, Cys-40, and Cys-43.

It belongs to the universal ribosomal protein uS14 family. Zinc-binding uS14 subfamily. As to quaternary structure, part of the 30S ribosomal subunit. Contacts proteins S3 and S10. The cofactor is Zn(2+).

Functionally, binds 16S rRNA, required for the assembly of 30S particles and may also be responsible for determining the conformation of the 16S rRNA at the A site. The chain is Small ribosomal subunit protein uS14 from Desulfitobacterium hafniense (strain Y51).